The primary structure comprises 186 residues: Peptidyl-tRNA hydrolase (186 aa).

Tyrosine 16 is a tRNA binding site. The Proton acceptor role is filled by histidine 21. Residues tyrosine 66, asparagine 68, and asparagine 114 each coordinate tRNA.

It belongs to the PTH family. Monomer.

It is found in the cytoplasm. The catalysed reaction is an N-acyl-L-alpha-aminoacyl-tRNA + H2O = an N-acyl-L-amino acid + a tRNA + H(+). Functionally, hydrolyzes ribosome-free peptidyl-tRNAs (with 1 or more amino acids incorporated), which drop off the ribosome during protein synthesis, or as a result of ribosome stalling. Catalyzes the release of premature peptidyl moieties from peptidyl-tRNA molecules trapped in stalled 50S ribosomal subunits, and thus maintains levels of free tRNAs and 50S ribosomes. This chain is Peptidyl-tRNA hydrolase, found in Ureaplasma parvum serovar 3 (strain ATCC 700970).